A 274-amino-acid polypeptide reads, in one-letter code: Penicillin-insensitive murein endopeptidase (274 aa).

Residues 1 to 19 form the signal peptide; that stretch reads MNKTAIALLALLASSASLA. 3 disulfide bridges follow: cysteine 44–cysteine 265, cysteine 187–cysteine 235, and cysteine 216–cysteine 223. The Zn(2+) site is built by histidine 110, histidine 113, aspartate 120, aspartate 147, histidine 150, and histidine 211. Residues 227-274 are disordered; sequence PLPPPGDGCGAELQSWFEPPKPGTTKPEKKTPPPLPPSCQALLDEHVI.

It belongs to the peptidase M74 family. In terms of assembly, dimer. It depends on Zn(2+) as a cofactor.

It localises to the periplasm. In terms of biological role, murein endopeptidase that cleaves the D-alanyl-meso-2,6-diamino-pimelyl amide bond that connects peptidoglycan strands. Likely plays a role in the removal of murein from the sacculus. This is Penicillin-insensitive murein endopeptidase from Escherichia coli O6:K15:H31 (strain 536 / UPEC).